The sequence spans 297 residues: Phosphatidylglycerol--prolipoprotein diacylglyceryl transferase (297 aa).

Helical transmembrane passes span 20–40 (FITIRWYGLLISVSVLIGLFV), 57–77 (EILPSLIISSILGARAYYVIF), 105–125 (AVWEGGIAIHGGLIGGLISII), and 133–153 (INLKTFIDILIPSIILGQSIG). A 1,2-diacyl-sn-glycero-3-phospho-(1'-sn-glycerol) is bound at residue arginine 154. 3 helical membrane passes run 193-213 (PTFLYESLWNLLIFIALIIIF), 225-245 (GFISFLYLISYSFGRFWIEGL), and 266-286 (AQFISIFLFSSGLIGIFFLRL).

The protein belongs to the Lgt family.

The protein resides in the cell inner membrane. It carries out the reaction L-cysteinyl-[prolipoprotein] + a 1,2-diacyl-sn-glycero-3-phospho-(1'-sn-glycerol) = an S-1,2-diacyl-sn-glyceryl-L-cysteinyl-[prolipoprotein] + sn-glycerol 1-phosphate + H(+). Its pathway is protein modification; lipoprotein biosynthesis (diacylglyceryl transfer). In terms of biological role, catalyzes the transfer of the diacylglyceryl group from phosphatidylglycerol to the sulfhydryl group of the N-terminal cysteine of a prolipoprotein, the first step in the formation of mature lipoproteins. The sequence is that of Phosphatidylglycerol--prolipoprotein diacylglyceryl transferase from Prochlorococcus marinus (strain MIT 9215).